Consider the following 664-residue polypeptide: DNA ligase (664 aa).

NAD(+)-binding positions include 30-34, 79-80, and Glu-109; these read DFEFD and SL. Lys-111 (N6-AMP-lysine intermediate) is an active-site residue. 4 residues coordinate NAD(+): Arg-132, Glu-169, Lys-284, and Lys-308. Residues Cys-403, Cys-406, Cys-421, and Cys-427 each contribute to the Zn(2+) site. The 79-residue stretch at 586–664 folds into the BRCT domain; the sequence is NRSEKLKGLT…NEDAFLNMLE (79 aa).

The protein belongs to the NAD-dependent DNA ligase family. LigA subfamily. Requires Mg(2+) as cofactor. Mn(2+) is required as a cofactor.

It carries out the reaction NAD(+) + (deoxyribonucleotide)n-3'-hydroxyl + 5'-phospho-(deoxyribonucleotide)m = (deoxyribonucleotide)n+m + AMP + beta-nicotinamide D-nucleotide.. In terms of biological role, DNA ligase that catalyzes the formation of phosphodiester linkages between 5'-phosphoryl and 3'-hydroxyl groups in double-stranded DNA using NAD as a coenzyme and as the energy source for the reaction. It is essential for DNA replication and repair of damaged DNA. This is DNA ligase from Parabacteroides distasonis (strain ATCC 8503 / DSM 20701 / CIP 104284 / JCM 5825 / NCTC 11152).